The sequence spans 801 residues: uncharacterized protein (801 aa).

The region spanning M1 to A93 is the PE domain.

The protein belongs to the mycobacterial PE family. PGRS subfamily.

This is an uncharacterized protein from Mycobacterium tuberculosis (strain ATCC 25618 / H37Rv).